We begin with the raw amino-acid sequence, 259 residues long: MATIKEIKELLVTVKELESPIFLDLEKDNRSGVQKEISKRKRAIQAELDENLRLESMLSYEKELYKQGLTLIAGIDEVGRGPLAGPVVAAAVILPKNCKIKGLNDSKKIPKKKHLEIFQAVQDQALSIGIGIIDNQVIDQVNIYEATKLAMQEAISQLSPQPEHLLIDAMKLDLPISQTSIIKGDANSLSIAAASIVAKVTRDELMKEYDQQFPGYDFATNAGYGTAKHLEGLTKLGVTPIHRTSFEPVKSLVLGKKES.

The RNase H type-2 domain occupies 70–258 (TLIAGIDEVG…VKSLVLGKKE (189 aa)). The a divalent metal cation site is built by D76, E77, and D168.

The protein belongs to the RNase HII family. Requires Mn(2+) as cofactor. Mg(2+) serves as cofactor.

It localises to the cytoplasm. The catalysed reaction is Endonucleolytic cleavage to 5'-phosphomonoester.. Functionally, endonuclease that specifically degrades the RNA of RNA-DNA hybrids. In Streptococcus pneumoniae (strain Taiwan19F-14), this protein is Ribonuclease HII.